The sequence spans 301 residues: Probable alpha-L-glutamate ligase 1 (301 aa).

One can recognise an ATP-grasp domain in the interval 104-287 (MQLMSRRGIG…VAGAIIEFVE (184 aa)). Residues K141, 178-179 (EY), D187, and 211-213 (RSN) each bind ATP. Positions 248, 260, and 262 each coordinate Mg(2+). Mn(2+) contacts are provided by D248, E260, and N262.

Belongs to the RimK family. Mg(2+) is required as a cofactor. The cofactor is Mn(2+).

The chain is Probable alpha-L-glutamate ligase 1 from Shewanella putrefaciens (strain CN-32 / ATCC BAA-453).